We begin with the raw amino-acid sequence, 77 residues long: MQVLVRDNNVDQALRALKKKMQREGIFREMKMRSYYEKPSERRAREKAEAIRRTRKLARKRAQREGFVSNGRTIAVK.

The protein belongs to the bacterial ribosomal protein bS21 family.

In Bartonella tribocorum (strain CIP 105476 / IBS 506), this protein is Small ribosomal subunit protein bS21.